Reading from the N-terminus, the 444-residue chain is tRNA modification GTPase MnmE (444 aa).

(6S)-5-formyl-5,6,7,8-tetrahydrofolate contacts are provided by R25, E83, and K122. The region spanning 218-370 (GFKVAIVGKP…IVGRLRDYLD (153 aa)) is the TrmE-type G domain. Residues 228 to 233 (NVGKSS), 247 to 253 (SDEAGTT), and 272 to 275 (DTAG) each bind GTP. 2 residues coordinate Mg(2+): S232 and T253. K444 serves as a coordination point for (6S)-5-formyl-5,6,7,8-tetrahydrofolate.

Belongs to the TRAFAC class TrmE-Era-EngA-EngB-Septin-like GTPase superfamily. TrmE GTPase family. Homodimer. Heterotetramer of two MnmE and two MnmG subunits. The cofactor is K(+).

The protein localises to the cytoplasm. Its function is as follows. Exhibits a very high intrinsic GTPase hydrolysis rate. Involved in the addition of a carboxymethylaminomethyl (cmnm) group at the wobble position (U34) of certain tRNAs, forming tRNA-cmnm(5)s(2)U34. This is tRNA modification GTPase MnmE from Campylobacter curvus (strain 525.92).